We begin with the raw amino-acid sequence, 626 residues long: tRNA uridine 5-carboxymethylaminomethyl modification enzyme MnmG (626 aa).

An FAD-binding site is contributed by 13–18 (GGGHAG). 273–287 (GPRYCPSIEDKIHRF) contributes to the NAD(+) binding site.

Belongs to the MnmG family. Homodimer. Heterotetramer of two MnmE and two MnmG subunits. Requires FAD as cofactor.

It localises to the cytoplasm. Its function is as follows. NAD-binding protein involved in the addition of a carboxymethylaminomethyl (cmnm) group at the wobble position (U34) of certain tRNAs, forming tRNA-cmnm(5)s(2)U34. This chain is tRNA uridine 5-carboxymethylaminomethyl modification enzyme MnmG, found in Acinetobacter baumannii (strain SDF).